Reading from the N-terminus, the 348-residue chain is tRNA pseudouridine synthase B (348 aa).

The Nucleophile role is filled by Asp-52.

It belongs to the pseudouridine synthase TruB family. Type 1 subfamily.

It carries out the reaction uridine(55) in tRNA = pseudouridine(55) in tRNA. Its function is as follows. Responsible for synthesis of pseudouridine from uracil-55 in the psi GC loop of transfer RNAs. The chain is tRNA pseudouridine synthase B from Rhodopirellula baltica (strain DSM 10527 / NCIMB 13988 / SH1).